A 174-amino-acid polypeptide reads, in one-letter code: MGKITFYEDRGFQGRCYQCSSDCPNLQPYFSRCNSIRVDSGCWMLYERPNYQGHQYFLRRGDYPDYQQWMGFNDSIRSCCLISDTSSHRLRLYEREDQKGLIAELSEDCPCIQDRFRLSEVRSLHVLEGCWVLYEMPNYRGRQYLLRPQEYRRYQDWGAVDAKAGSLRRVVDLY.

Beta/gamma crystallin 'Greek key' domains follow at residues 2-40 (GKIT…RVDS) and 41-83 (GCWM…CLIS). Residue Cys23 is modified to S-methylcysteine. The segment at 84-87 (DTSS) is connecting peptide. 2 Beta/gamma crystallin 'Greek key' domains span residues 88 to 128 (HRLR…HVLE) and 129 to 171 (GCWV…RRVV).

The protein belongs to the beta/gamma-crystallin family.

In terms of biological role, crystallins are the dominant structural components of the vertebrate eye lens. In Bos taurus (Bovine), this protein is Gamma-crystallin C (CRYGC).